Consider the following 350-residue polypeptide: MQRSLDSLAGMATSAFGAGTSAAMRQATSPKTILEYIINFFTCGGIRRRNETQYQELIETMAETLKSTMPDRGAPLPENIILDDMDGCRVEFNLPGENNEAGQVIVRVSKGDHSETREIPLVSFEKICRALLFRCEFSLPQDSVILTAQGGMNLKGAVLTGANLTAENLCDADLSGANLEGAVLFMADCEGANFKGANLSGTSLGDSNFKNACLEDGIMCGATLDHANLTGANLQHASLLGCSMIECNCSGANMDHTNLSGATLIRADMSGATLQGATIMAAIMEDAVLTRANLRKASFISTNLDGADLAEANLNNTCFKDCTLTHLRTEDATMSTSTQTLFNEFYSENI.

Pentapeptide repeat domains lie at 162–201 (ANLT…NLSG), 202–241 (TSLG…SLLG), 247–286 (CNCS…IMED), and 287–326 (AVLT…TLTH).

Interacts with the host kinesin light chain (KLC), a subunit of the kinesin-1 motor complex.

The protein resides in the secreted. It is found in the host membrane. Effector proteins function to alter host cell physiology and promote bacterial survival in host tissues. Involved in the reorganization of late endosome/lysosome (LE/Lys) compartments in mammalian cells. Necessary and sufficient to link kinesin-1 onto the Salmonella-containing vacuole (SCV) membrane. Required for centrifugal extension of lysosomal glycoprotein-rich membrane tubules, known as Salmonella-induced filaments (Sifs), away from the SCV and toward the cell periphery. Required for virulence, but not for intracellular survival and replication in phagocytic cells. In Salmonella paratyphi A (strain ATCC 9150 / SARB42), this protein is Secreted effector protein PipB2 (pipB2).